We begin with the raw amino-acid sequence, 451 residues long: Phosphoglucosamine mutase (451 aa).

The Phosphoserine intermediate role is filled by S103. 4 residues coordinate Mg(2+): S103, D243, D245, and D247. Residue S103 is modified to Phosphoserine.

The protein belongs to the phosphohexose mutase family. It depends on Mg(2+) as a cofactor. In terms of processing, activated by phosphorylation.

The enzyme catalyses alpha-D-glucosamine 1-phosphate = D-glucosamine 6-phosphate. Its function is as follows. Catalyzes the conversion of glucosamine-6-phosphate to glucosamine-1-phosphate. This chain is Phosphoglucosamine mutase, found in Lactobacillus johnsonii (strain CNCM I-12250 / La1 / NCC 533).